A 361-amino-acid chain; its full sequence is MLLWLADLLGSHIRAFNVFNYTTLRAVMAALTALTISLLLGPWVIRKLTELKVGQAVRNDGPQTHLVKAGTPTMGGSLILLAITLTTLLWADLSNKYVWLLLAVMLGTGALGFYDDWRKVVYKDPKGVSAKFKMAWQSAIAIGAGVFLIATAKLPASTELIVPFFKTVAYPLGAVGFCVLTYFVIVGTSNAVNLTDGLDGLAALPTVLVSAGLAIFAYVAGHAVFSKYLGLPFIPGAHEVVVFCAAMCGACLGFLWFNAYPAQVFMGDVGALALGAALGTVAVIVRQEIVLFLMGGLFVMEALSVMIQVTSFKLTGKRVFRMAPLHHHFELKGWKETQVVVRFWIVTMMLVLIGLSTLKLR.

10 consecutive transmembrane segments (helical) span residues 25 to 45 (RAVMAALTALTISLLLGPWVI), 73 to 93 (TMGGSLILLAITLTTLLWADL), 97 to 117 (YVWLLLAVMLGTGALGFYDDW), 132 to 152 (FKMAWQSAIAIGAGVFLIATA), 167 to 187 (TVAYPLGAVGFCVLTYFVIVG), 200 to 220 (GLAALPTVLVSAGLAIFAYVA), 240 to 260 (VVVFCAAMCGACLGFLWFNAY), 264 to 284 (VFMGDVGALALGAALGTVAVI), 289 to 309 (IVLFLMGGLFVMEALSVMIQV), and 338 to 358 (QVVVRFWIVTMMLVLIGLSTL).

This sequence belongs to the glycosyltransferase 4 family. MraY subfamily. Mg(2+) is required as a cofactor.

It is found in the cell inner membrane. The enzyme catalyses UDP-N-acetyl-alpha-D-muramoyl-L-alanyl-gamma-D-glutamyl-meso-2,6-diaminopimeloyl-D-alanyl-D-alanine + di-trans,octa-cis-undecaprenyl phosphate = di-trans,octa-cis-undecaprenyl diphospho-N-acetyl-alpha-D-muramoyl-L-alanyl-D-glutamyl-meso-2,6-diaminopimeloyl-D-alanyl-D-alanine + UMP. It participates in cell wall biogenesis; peptidoglycan biosynthesis. Its function is as follows. Catalyzes the initial step of the lipid cycle reactions in the biosynthesis of the cell wall peptidoglycan: transfers peptidoglycan precursor phospho-MurNAc-pentapeptide from UDP-MurNAc-pentapeptide onto the lipid carrier undecaprenyl phosphate, yielding undecaprenyl-pyrophosphoryl-MurNAc-pentapeptide, known as lipid I. The sequence is that of Phospho-N-acetylmuramoyl-pentapeptide-transferase from Chromobacterium violaceum (strain ATCC 12472 / DSM 30191 / JCM 1249 / CCUG 213 / NBRC 12614 / NCIMB 9131 / NCTC 9757 / MK).